The following is a 385-amino-acid chain: 8-amino-7-oxononanoate synthase (385 aa).

Arg-21 contributes to the substrate binding site. Residue 108–109 coordinates pyridoxal 5'-phosphate; that stretch reads GF. Substrate is bound at residue His-133. Residues Ser-179, His-207, and Thr-233 each contribute to the pyridoxal 5'-phosphate site. Lys-236 is subject to N6-(pyridoxal phosphate)lysine. Thr-352 serves as a coordination point for substrate.

Belongs to the class-II pyridoxal-phosphate-dependent aminotransferase family. BioF subfamily. In terms of assembly, homodimer. Pyridoxal 5'-phosphate serves as cofactor.

It carries out the reaction 6-carboxyhexanoyl-[ACP] + L-alanine + H(+) = (8S)-8-amino-7-oxononanoate + holo-[ACP] + CO2. It participates in cofactor biosynthesis; biotin biosynthesis. Its function is as follows. Catalyzes the decarboxylative condensation of pimeloyl-[acyl-carrier protein] and L-alanine to produce 8-amino-7-oxononanoate (AON), [acyl-carrier protein], and carbon dioxide. The sequence is that of 8-amino-7-oxononanoate synthase from Salmonella paratyphi B (strain ATCC BAA-1250 / SPB7).